The chain runs to 437 residues: GTPase Der (437 aa).

EngA-type G domains lie at 3 to 167 (NIVA…TKKV) and 176 to 352 (PAIA…DIRQ). Residues 9–16 (GRPNVGKS), 56–60 (DTGGW), 119–122 (NKAD), 182–189 (GKPNVGKS), 229–233 (DTAGI), and 294–297 (NKWD) each bind GTP. Residues 353-437 (IKIPTSQLNR…TPINIFMREK (85 aa)) enclose the KH-like domain.

It belongs to the TRAFAC class TrmE-Era-EngA-EngB-Septin-like GTPase superfamily. EngA (Der) GTPase family. In terms of assembly, associates with the 50S ribosomal subunit.

Its function is as follows. GTPase that plays an essential role in the late steps of ribosome biogenesis. This chain is GTPase Der, found in Azobacteroides pseudotrichonymphae genomovar. CFP2.